A 236-amino-acid polypeptide reads, in one-letter code: MNQSVQPDPKVVVALDFPKTQLAEDFARHLDPQLCRLKVGKELFALGGPQLVEKLITQGFEVFLDLKYHDIPNTVAMACRAAAEMGVWMVNVHSLGGRKMMEAAKEAVLSASHQPLLIGVTILTSMETEDLAEIGLTGTPKENVLRLAKLAHSSGLDGVVSSAQEASDLRKEIGQDFCLVTPGIRPANADVNDQKRIMTPADAMAAGSSYLVVGRPITQAKDPIAVLNEINASIGR.

Substrate contacts are provided by residues Asp16, Lys38, 65–74, Thr124, Arg185, Gln194, Gly214, and Arg215; that span reads DLKYHDIPNT. Residue Lys67 is the Proton donor of the active site.

Belongs to the OMP decarboxylase family. Type 1 subfamily. As to quaternary structure, homodimer.

It catalyses the reaction orotidine 5'-phosphate + H(+) = UMP + CO2. Its pathway is pyrimidine metabolism; UMP biosynthesis via de novo pathway; UMP from orotate: step 2/2. In terms of biological role, catalyzes the decarboxylation of orotidine 5'-monophosphate (OMP) to uridine 5'-monophosphate (UMP). This Hydrogenovibrio crunogenus (strain DSM 25203 / XCL-2) (Thiomicrospira crunogena) protein is Orotidine 5'-phosphate decarboxylase.